Consider the following 152-residue polypeptide: Superoxide dismutase [Cu-Zn] (152 aa).

Residues His45, His47, and His62 each contribute to the Cu cation site. Cys56 and Cys145 are joined by a disulfide. Residues His62, His70, His79, and Asp82 each contribute to the Zn(2+) site. His119 contacts Cu cation.

Belongs to the Cu-Zn superoxide dismutase family. As to quaternary structure, homodimer. The cofactor is Cu cation. Requires Zn(2+) as cofactor.

The protein resides in the cytoplasm. It catalyses the reaction 2 superoxide + 2 H(+) = H2O2 + O2. Functionally, destroys radicals which are normally produced within the cells and which are toxic to biological systems. The protein is Superoxide dismutase [Cu-Zn] (SODCC) of Panax ginseng (Korean ginseng).